A 124-amino-acid chain; its full sequence is Putative membrane protein insertion efficiency factor (124 aa).

Residues 1-12 (MCPQPHADHAIT) are compositionally biased toward basic and acidic residues. Residues 1–26 (MCPQPHADHAITRGDTGAAGGRNWSG) form a disordered region.

The protein belongs to the UPF0161 family.

The protein localises to the cell inner membrane. In terms of biological role, could be involved in insertion of integral membrane proteins into the membrane. This is Putative membrane protein insertion efficiency factor from Rhizobium meliloti (strain 1021) (Ensifer meliloti).